The chain runs to 85 residues: UPF0291 protein SEQ_0545 (85 aa).

Positions 62–85 (TPEKLRQVQREKGLHGRSLDDPES) are disordered.

It belongs to the UPF0291 family.

It is found in the cytoplasm. The chain is UPF0291 protein SEQ_0545 from Streptococcus equi subsp. equi (strain 4047).